The chain runs to 121 residues: Small ribosomal subunit protein uS13 (121 aa).

The tract at residues 95–121 is disordered; sequence GLPVRGQKTKTNARTRKGKRKTVGAKS.

The protein belongs to the universal ribosomal protein uS13 family. As to quaternary structure, part of the 30S ribosomal subunit. Forms a loose heterodimer with protein S19. Forms two bridges to the 50S subunit in the 70S ribosome.

Located at the top of the head of the 30S subunit, it contacts several helices of the 16S rRNA. In the 70S ribosome it contacts the 23S rRNA (bridge B1a) and protein L5 of the 50S subunit (bridge B1b), connecting the 2 subunits; these bridges are implicated in subunit movement. Contacts the tRNAs in the A and P-sites. This Campylobacter jejuni subsp. jejuni serotype O:23/36 (strain 81-176) protein is Small ribosomal subunit protein uS13.